Consider the following 268-residue polypeptide: Myeloid leukemia factor 1 (268 aa).

Residues S8, S32, and S34 each carry the phosphoserine modification. Disordered stretches follow at residues 44-66 (ISDGRGRAHNRRGHNDGEDSLTH) and 209-268 (GRHN…SNKK). The interaction with COPS3 stretch occupies residues 50–125 (RAHNRRGHND…IGDEPPKVFQ (76 aa)). 2 stretches are compositionally biased toward basic and acidic residues: residues 56–65 (GHNDGEDSLT) and 226–237 (PGSRELKRREKP).

This sequence belongs to the MLF family. Interacts with CENPU. Also interacts with NRBP1/MADM, YWHAZ/14-3-3-zeta and HNRPUL2/MANP. NRBP1 recruits a serine kinase which phosphorylates both itself and MLF1. Phosphorylated MLF1 then binds to YWHAZ and is retained in the cytoplasm. Retained in the nucleus by binding to HNRPUL2. Binds to COPS3/CSN3 which is required for suppression of COP1 and activation of p53. Post-translationally, phosphorylation is required for binding to YWHAZ. Most abundant in testis, ovary, skeletal muscle, heart, kidney and colon. Low expression in spleen, thymus and peripheral blood leukocytes.

It is found in the cytoplasm. Its subcellular location is the nucleus. The protein localises to the cell projection. The protein resides in the cilium. It localises to the cytoskeleton. It is found in the cilium basal body. Functionally, involved in lineage commitment of primary hemopoietic progenitors by restricting erythroid formation and enhancing myeloid formation. Interferes with erythropoietin-induced erythroid terminal differentiation by preventing cells from exiting the cell cycle through suppression of CDKN1B/p27Kip1 levels. Suppresses COP1 activity via CSN3 which activates p53 and induces cell cycle arrest. Binds DNA and affects the expression of a number of genes so may function as a transcription factor in the nucleus. This Homo sapiens (Human) protein is Myeloid leukemia factor 1 (MLF1).